The chain runs to 134 residues: Large ribosomal subunit protein bL20 (134 aa).

The protein belongs to the bacterial ribosomal protein bL20 family.

Functionally, binds directly to 23S ribosomal RNA and is necessary for the in vitro assembly process of the 50S ribosomal subunit. It is not involved in the protein synthesizing functions of that subunit. The chain is Large ribosomal subunit protein bL20 from Rhizobium leguminosarum bv. trifolii (strain WSM2304).